The chain runs to 195 residues: MDRTTLPYGLFGLDIDPYKEFGATVELLSFLPSDFFPSVRDLLDTASALYRESLESSDHCSPHHTALRQAILCWGELMTLATWVGNNLEDPASRDLVVNYVNTNMGLKIRQLLWFHISCLTFGRETVLEYLVSFGVWIRTPPAYRPPNAPILSTLPETTVVRRRGRSPRRRTPSPRRRRSQSPRRRRSASPASQC.

The disordered stretch occupies residues 148–195; sequence NAPILSTLPETTVVRRRGRSPRRRTPSPRRRRSQSPRRRRSASPASQC. Positions 161-188 are enriched in basic residues; it reads VRRRGRSPRRRTPSPRRRRSQSPRRRRS. Residues Ser167, Ser174, and Ser182 each carry the phosphoserine; by host modification. The 1; half-length repeat unit spans residues 167–172; the sequence is SPRRRT. The 3 X 7 AA repeats of S-P-R-R-R-[PR]-S stretch occupies residues 167 to 188; sequence SPRRRTPSPRRRRSQSPRRRRS. A Bipartite nuclear localization signal motif is present at residues 170 to 187; sequence RRTPSPRRRRSQSPRRRR. Tandem repeats lie at residues 174–180 and 182–188. Residues 189–195 are RNA binding; it reads ASPASQC.

This sequence belongs to the orthohepadnavirus core antigen family. Homodimerizes, then multimerizes. Interacts with cytosol exposed regions of viral L glycoprotein present in the reticulum-to-Golgi compartment. Interacts with human FLNB. Phosphorylated form interacts with host importin alpha; this interaction depends on the exposure of the NLS, which itself depends upon genome maturation and/or phosphorylation of the capsid protein. Interacts with host NUP153. Post-translationally, phosphorylated by host SRPK1, SRPK2, and maybe protein kinase C or GAPDH. Phosphorylation is critical for pregenomic RNA packaging. Protein kinase C phosphorylation is stimulated by HBx protein and may play a role in transport of the viral genome to the nucleus at the late step during the viral replication cycle.

The protein localises to the virion. It is found in the host cytoplasm. Self assembles to form an icosahedral capsid. Most capsids appear to be large particles with an icosahedral symmetry of T=4 and consist of 240 copies of capsid protein, though a fraction forms smaller T=3 particles consisting of 180 capsid proteins. Entering capsids are transported along microtubules to the nucleus. Phosphorylation of the capsid is thought to induce exposure of nuclear localization signal in the C-terminal portion of the capsid protein that allows binding to the nuclear pore complex via the importin (karyopherin-) alpha and beta. Capsids are imported in intact form through the nuclear pore into the nuclear basket, where it probably binds NUP153. Only capsids that contain the mature viral genome can release the viral DNA and capsid protein into the nucleoplasm. Immature capsids get stuck in the basket. Capsids encapsulate the pre-genomic RNA and the P protein. Pre-genomic RNA is reverse-transcribed into DNA while the capsid is still in the cytoplasm. The capsid can then either be directed to the nucleus, providing more genomes for transcription, or bud through the endoplasmic reticulum to provide new virions. The sequence is that of Capsid protein from Hepatitis B virus genotype G (isolate IG29227/2000) (HBV-G).